The primary structure comprises 339 residues: Dicamba O-demethylase, oxygenase component (339 aa).

The Rieske domain maps to 8–110 (WYVAALPEEL…VVERDALIWI (103 aa)). Residues C48, H50, C67, and H70 each coordinate [2Fe-2S] cluster. Residues H159 and H164 each coordinate Fe cation. 3,6-dichloro-2-methoxybenzoate-binding residues include N229, H250, and W284. D293 lines the Fe cation pocket.

In terms of assembly, homotrimer. The dicamba O-demethylase multicomponent enzyme system is composed of an oxygenase component (DdmC) and an electron transfer component formed by a ferredoxin reductase (DdmA) and a ferredoxin (DdmB). In vitro, dicamba O-demethylase assays in which DdmA2 is substituted for DdmA1 demonstrate that the two enzymes possess nearly identical activities. It depends on [2Fe-2S] cluster as a cofactor.

It catalyses the reaction 3,6-dichloro-2-methoxybenzoate + 2 reduced [2Fe-2S]-[ferredoxin] + O2 + 2 H(+) = 3,6-dichlorosalicylate + formaldehyde + 2 oxidized [2Fe-2S]-[ferredoxin] + H2O. With respect to regulation, activity enhanced by Fe(2+) and Mg(2+) ions. In terms of biological role, component of the dicamba O-demethylase multicomponent enzyme system involved in the degradation of the herbicide dicamba. In vitro, catalyzes the O-demethylation of 2-methoxy-3,6-dichlorobenzoic acid (dicamba) to yield 3,6-dichlorosalicylic acid (DCSA) via an exocyclic monooxygenation. This chain is Dicamba O-demethylase, oxygenase component, found in Stenotrophomonas maltophilia (Pseudomonas maltophilia).